A 369-amino-acid polypeptide reads, in one-letter code: Cobalt-precorrin-5B C(1)-methyltransferase (369 aa).

The protein belongs to the CbiD family.

It carries out the reaction Co-precorrin-5B + S-adenosyl-L-methionine = Co-precorrin-6A + S-adenosyl-L-homocysteine. It participates in cofactor biosynthesis; adenosylcobalamin biosynthesis; cob(II)yrinate a,c-diamide from sirohydrochlorin (anaerobic route): step 6/10. Catalyzes the methylation of C-1 in cobalt-precorrin-5B to form cobalt-precorrin-6A. This Brucella melitensis biotype 2 (strain ATCC 23457) protein is Cobalt-precorrin-5B C(1)-methyltransferase.